A 387-amino-acid chain; its full sequence is Deoxyguanosinetriphosphate triphosphohydrolase-like protein (387 aa).

The 132-residue stretch at 78–209 (RLTHSLEVAQ…ANLADEVAYN (132 aa)) folds into the HD domain.

This sequence belongs to the dGTPase family. Type 2 subfamily.

This chain is Deoxyguanosinetriphosphate triphosphohydrolase-like protein, found in Ralstonia nicotianae (strain ATCC BAA-1114 / GMI1000) (Ralstonia solanacearum).